The following is a 253-amino-acid chain: Phosphoadenosine 5'-phosphosulfate reductase (253 aa).

The active-site Nucleophile; cysteine thiosulfonate intermediate is the C242.

Belongs to the PAPS reductase family. CysH subfamily.

Its subcellular location is the cytoplasm. The enzyme catalyses [thioredoxin]-disulfide + sulfite + adenosine 3',5'-bisphosphate + 2 H(+) = [thioredoxin]-dithiol + 3'-phosphoadenylyl sulfate. It participates in sulfur metabolism; hydrogen sulfide biosynthesis; sulfite from sulfate: step 3/3. Its function is as follows. Catalyzes the formation of sulfite from phosphoadenosine 5'-phosphosulfate (PAPS) using thioredoxin as an electron donor. This chain is Phosphoadenosine 5'-phosphosulfate reductase, found in Vibrio cholerae serotype O1 (strain ATCC 39541 / Classical Ogawa 395 / O395).